The sequence spans 381 residues: Cytochrome b (381 aa).

4 consecutive transmembrane segments (helical) span residues 34-54, 78-99, 114-134, and 179-199; these read FGSL…FLAM, WLIR…YLHI, WNIG…GYVL, and FFAF…IHLL. Heme b is bound by residues His-84 and His-98. Heme b-binding residues include His-183 and His-197. His-202 contributes to the a ubiquinone binding site. Transmembrane regions (helical) follow at residues 227-247, 289-309, 321-341, and 348-368; these read YKDL…ALFM, LGGV…PLLH, LTQI…WIGG, and FITV…IIMP.

This sequence belongs to the cytochrome b family. In terms of assembly, the cytochrome bc1 complex contains 3 respiratory subunits (MT-CYB, CYC1 and UQCRFS1), 2 core proteins (UQCRC1 and UQCRC2) and probably 6 low-molecular weight proteins. Heme b serves as cofactor.

It is found in the mitochondrion inner membrane. Functionally, component of the ubiquinol-cytochrome c reductase complex (complex III or cytochrome b-c1 complex) that is part of the mitochondrial respiratory chain. The b-c1 complex mediates electron transfer from ubiquinol to cytochrome c. Contributes to the generation of a proton gradient across the mitochondrial membrane that is then used for ATP synthesis. This chain is Cytochrome b (mt-cyb), found in Sphyrna lewini (Scalloped hammerhead shark).